Reading from the N-terminus, the 671-residue chain is Replication protein A 70 kDa DNA-binding subunit (671 aa).

2 disordered regions span residues 143–166 (QVSQ…PAVN) and 190–219 (MNKT…LQIS). Residues 199 to 213 (NNNNNNNNNGNNKNN) show a composition bias toward low complexity. Residues 240-322 (QTIKVRITKK…NKGDHTVTVN (83 aa)) constitute a DNA-binding region (OB). Residues 530–549 (CFSCKKKIARNNEVWTCINC) form a C4-type zinc finger.

This sequence belongs to the replication factor A protein 1 family. Component of the replication protein A complex (RPA), a heterotrimeric complex composed of RPA1, RPA2/TEB2 and RPA3/TEB3.

As part of the heterotrimeric replication protein A (RPA) complex, binds and stabilizes single-stranded DNA intermediates, that form during DNA replication or upon DNA stress. It prevents their reannealing and in parallel, recruits and activates different proteins and complexes involved in DNA metabolism. Thereby, it plays an essential role both in DNA replication and the cellular response to DNA damage. In the cellular response to DNA damage, the RPA complex controls DNA repair and DNA damage checkpoint activation. The polypeptide is Replication protein A 70 kDa DNA-binding subunit (Tetrahymena thermophila (strain SB210)).